A 479-amino-acid polypeptide reads, in one-letter code: Ribosomal RNA small subunit methyltransferase F (479 aa).

Residues alanine 125 to lysine 131, glutamate 149, aspartate 176, and aspartate 194 contribute to the S-adenosyl-L-methionine site. Cysteine 247 acts as the Nucleophile in catalysis.

It belongs to the class I-like SAM-binding methyltransferase superfamily. RsmB/NOP family.

It is found in the cytoplasm. It catalyses the reaction cytidine(1407) in 16S rRNA + S-adenosyl-L-methionine = 5-methylcytidine(1407) in 16S rRNA + S-adenosyl-L-homocysteine + H(+). Its function is as follows. Specifically methylates the cytosine at position 1407 (m5C1407) of 16S rRNA. In Shigella boydii serotype 4 (strain Sb227), this protein is Ribosomal RNA small subunit methyltransferase F.